The primary structure comprises 98 residues: Defensin-like protein 68 (98 aa).

The N-terminal stretch at 1–19 (MGSSKLLVALTLVVMITIS) is a signal peptide. Disulfide bonds link C38–C88, C42–C65, C51–C86, and C55–C87.

It belongs to the DEFL family.

Its subcellular location is the secreted. The polypeptide is Defensin-like protein 68 (Arabidopsis thaliana (Mouse-ear cress)).